Here is a 169-residue protein sequence, read N- to C-terminus: Cell division inhibitor SulA (169 aa).

Residues 106–112 (ALRTGNY) are ftsZ binding. The interval 162–169 (KIHSNLYH) is lon protease binding.

This sequence belongs to the SulA family. As to quaternary structure, interacts with FtsZ. Is rapidly cleaved and degraded by the Lon protease once DNA damage is repaired.

Functionally, component of the SOS system and an inhibitor of cell division. Accumulation of SulA causes rapid cessation of cell division and the appearance of long, non-septate filaments. In the presence of GTP, binds a polymerization-competent form of FtsZ in a 1:1 ratio, thus inhibiting FtsZ polymerization and therefore preventing it from participating in the assembly of the Z ring. This mechanism prevents the premature segregation of damaged DNA to daughter cells during cell division. The polypeptide is Cell division inhibitor SulA (Shigella flexneri serotype 5b (strain 8401)).